The sequence spans 32 residues: MLGEGASKVELQQLRTEHDSLKVQIRKDQKSI.

This is an uncharacterized protein from Haemophilus influenzae (strain ATCC 51907 / DSM 11121 / KW20 / Rd).